A 348-amino-acid chain; its full sequence is Protein disulfide isomerase CRELD2 (348 aa).

The N-terminal stretch at 1–22 is a signal peptide; the sequence is MHLPPAAAVGLLLLLLPPPARV. A CXXC motif is present at residues 30–33; that stretch reads CQRC. Cystine bridges form between Cys-30-Cys-33, Cys-139-Cys-153, Cys-147-Cys-165, and Cys-167-Cys-176. Residues 135–177 enclose the EGF-like 1 domain; it reads DCQECQGGSQRPCSGNGHCDGDGSRQGDGSCQCHVGYKGPLCI. The FU 1 repeat unit spans residues 192 to 239; that stretch reads HSFCTACDESCKTCSGPTNKGCVECEVGWTRVEDACVDVDECAAETPP. Residue Asn-250 is glycosylated (N-linked (GlcNAc...) asparagine). Residues 252-299 form an FU 2 repeat; sequence SYTCEECDSTCVGCTGKGPANCKECISGYSKQKGECADIDECSLETKV. Residues 262–265 carry the CXXC motif; sequence CVGC. 4 disulfide bridges follow: Cys-262–Cys-265, Cys-293–Cys-307, Cys-300–Cys-316, and Cys-318–Cys-328. The region spanning 289 to 329 is the EGF-like 2; calcium-binding domain; it reads DIDECSLETKVCKKENENCYNTPGSFVCVCPEGFEEDRRCL.

Belongs to the CRELD family. As to quaternary structure, interacts with CHRNA4. Component of a complex containing at least CRELD2, MANF, MATN3 and PDIA4.

Its subcellular location is the endoplasmic reticulum. The catalysed reaction is Catalyzes the rearrangement of -S-S- bonds in proteins.. Protein disulfide isomerase. Might play a role in the unfolded protein response. May regulate transport of alpha4-beta2 neuronal acetylcholine receptor. The protein is Protein disulfide isomerase CRELD2 (CRELD2) of Cricetulus griseus (Chinese hamster).